A 102-amino-acid chain; its full sequence is uncharacterized protein (102 aa).

An N-terminal signal peptide occupies residues 1-22; that stretch reads MKFKYGATLFSGFLGLSAILAA. A lipid anchor (N-palmitoyl cysteine) is attached at Cys23. Cys23 carries the S-diacylglycerol cysteine lipid modification.

The protein belongs to the MG185/MG260 family.

Its subcellular location is the cell membrane. This is an uncharacterized protein from Mycoplasma pneumoniae (strain ATCC 29342 / M129 / Subtype 1) (Mycoplasmoides pneumoniae).